Consider the following 184-residue polypeptide: LELRPRARYSLQLRARLNGPTYQGPWSAWSPPARVSTGSETAWITLVTALLLVLSLSALLGLLLLKWQFPAHYRRLRHALWPSLPDLHRVLGQYLRDTAALSPSKATVTDSCEEVEPSLLEILPKSSESTPLPLCPSQPQMDYRGLQPCLRTMPLSVCPPMAETGSCCTTHIANHSYLPLSYWQ.

The WSXWS motif signature appears at 26–30 (WSAWS). Residues 44–64 (ITLVTALLLVLSLSALLGLLL) traverse the membrane as a helical segment. Residues 80 to 88 (LWPSLPDLH) carry the Box 1 motif motif.

The protein belongs to the type I cytokine receptor family. Type 1 subfamily.

The protein localises to the membrane. Functionally, truncated form of the receptor for thrombopoietin. This chain is Myeloproliferative leukemia protein (V-MPL), found in Mus musculus (Mouse).